The chain runs to 100 residues: Urease subunit gamma (100 aa).

It belongs to the urease gamma subunit family. As to quaternary structure, heterotrimer of UreA (gamma), UreB (beta) and UreC (alpha) subunits. Three heterotrimers associate to form the active enzyme.

It localises to the cytoplasm. The catalysed reaction is urea + 2 H2O + H(+) = hydrogencarbonate + 2 NH4(+). It functions in the pathway nitrogen metabolism; urea degradation; CO(2) and NH(3) from urea (urease route): step 1/1. The sequence is that of Urease subunit gamma from Paenarthrobacter aurescens (strain TC1).